Here is a 1374-residue protein sequence, read N- to C-terminus: Serine/threonine-protein kinase LMTK1 (1374 aa).

A helical membrane pass occupies residues 32-52 (LAVVAVSFSGLFAVIVLMLAC). Positions 125–395 (LLYLKEIGRG…PTAEEVHLLL (271 aa)) constitute a Protein kinase domain. ATP is bound by residues 131 to 139 (IGRGWFGKV) and Lys-156. Catalysis depends on Asp-253, which acts as the Proton acceptor. The residue at position 495 (Ser-495) is a Phosphoserine. 5 disordered regions span residues 542 to 622 (GHDP…LAEG), 667 to 731 (VGAR…LLGL), 765 to 1195 (WTET…PAVP), 1245 to 1302 (QESP…AWDD), and 1320 to 1374 (AAPA…SKEA). The segment covering 606 to 620 (PSRSPSPSAGPLSLA) has biased composition (low complexity). The span at 680–690 (SNVSANNNSGS) shows a compositional bias: polar residues. Low complexity-rich tracts occupy residues 719–731 (PEPGYPGEPLLGL), 801–831 (SPSQEGAPLPSEEASAPDAPDALPDSPTPAT), and 847–856 (SSSSPEVEAP). The span at 865-878 (EATSGIFTDTSSDG) shows a compositional bias: polar residues. A compositionally biased stretch (low complexity) spans 900–914 (PDSLDSLDIPSSASD). Positions 978-987 (RLSTSLSGLN) are enriched in polar residues. The residue at position 1029 (Ser-1029) is a Phosphoserine. Over residues 1063 to 1073 (EGSSPEPSTCP) the composition is skewed to polar residues. Over residues 1138-1155 (TPRAPLRLALPGLPAALE) the composition is skewed to low complexity. Residues 1158-1173 (PEEEEEDSEDSDESDE) show a composition bias toward acidic residues. Ser-1168, Ser-1171, Ser-1184, Ser-1187, and Ser-1262 each carry phosphoserine. A compositionally biased stretch (polar residues) spans 1272 to 1291 (GSPSAPNRPQQADGSPNGST). Positions 1321-1332 (APAPAAPTPTPA) are enriched in pro residues. A compositionally biased stretch (polar residues) spans 1337-1352 (FTVSPAPTSRFSITHV). Residues 1353 to 1363 (SDSDAESKRGP) show a composition bias toward basic and acidic residues. Over residues 1365–1374 (AGAGGESKEA) the composition is skewed to gly residues.

It belongs to the protein kinase superfamily. Tyr protein kinase family. As to quaternary structure, interacts with CDK5. Autophosphorylated. Phosphorylated by CDK5. In terms of tissue distribution, expressed in brain.

The protein localises to the membrane. Its subcellular location is the cytoplasm. The protein resides in the perinuclear region. It catalyses the reaction L-seryl-[protein] + ATP = O-phospho-L-seryl-[protein] + ADP + H(+). It carries out the reaction L-threonyl-[protein] + ATP = O-phospho-L-threonyl-[protein] + ADP + H(+). In terms of biological role, may be involved in neuronal differentiation. The protein is Serine/threonine-protein kinase LMTK1 (AATK) of Homo sapiens (Human).